Here is a 58-residue protein sequence, read N- to C-terminus: Small ribosomal subunit protein bS21 (58 aa).

The segment at 39 to 58 (DKPSVKKRAKSKAAAKYRSR) is disordered. Positions 43–58 (VKKRAKSKAAAKYRSR) are enriched in basic residues.

Belongs to the bacterial ribosomal protein bS21 family.

The sequence is that of Small ribosomal subunit protein bS21 (rpsU) from Chlamydia pneumoniae (Chlamydophila pneumoniae).